Here is a 194-residue protein sequence, read N- to C-terminus: UPF0232 protein in recF-gyrB intergenic region (194 aa).

Residues 1 to 14 show a composition bias toward acidic residues; sequence MTGPFDDDGPEEDA. The interval 1-81 is disordered; sequence MTGPFDDDGP…GPGPDARDPQ (81 aa). Over residues 30–52 the composition is skewed to basic and acidic residues; that stretch reads DLVRRTLEEARGAARSQGKDVGR.

Belongs to the UPF0232 family.

In Mycolicibacterium smegmatis (Mycobacterium smegmatis), this protein is UPF0232 protein in recF-gyrB intergenic region.